A 187-amino-acid chain; its full sequence is MHCPFCRHPDSRVVDSRTTDDGTSIRRRRQCPDCSRRFTTVETCSLMVVKRSGVTEPFSRTKVINGVRKACQGRPVTEDALAQLGQRVEEAVRATGSAELTTHDVGLAILGPLRELDLVAYLRFASVYRAFDSLEDFEAAIAELREEQRERPAVDDEDHEDAGAERQGTDRGSGGTVEVPVPATVAD.

A zinc finger lies at 3–34; that stretch reads CPFCRHPDSRVVDSRTTDDGTSIRRRRQCPDC. The region spanning 46 to 136 is the ATP-cone domain; sequence LMVVKRSGVT…VYRAFDSLED (91 aa). The interval 146 to 187 is disordered; sequence EEQRERPAVDDEDHEDAGAERQGTDRGSGGTVEVPVPATVAD.

This sequence belongs to the NrdR family. Requires Zn(2+) as cofactor.

Functionally, negatively regulates transcription of bacterial ribonucleotide reductase nrd genes and operons by binding to NrdR-boxes. This is Transcriptional repressor NrdR from Streptomyces avermitilis (strain ATCC 31267 / DSM 46492 / JCM 5070 / NBRC 14893 / NCIMB 12804 / NRRL 8165 / MA-4680).